Consider the following 288-residue polypeptide: ATP synthase gamma chain (288 aa).

It belongs to the ATPase gamma chain family. In terms of assembly, F-type ATPases have 2 components, CF(1) - the catalytic core - and CF(0) - the membrane proton channel. CF(1) has five subunits: alpha(3), beta(3), gamma(1), delta(1), epsilon(1). CF(0) has three main subunits: a, b and c.

Its subcellular location is the cell membrane. Functionally, produces ATP from ADP in the presence of a proton gradient across the membrane. The gamma chain is believed to be important in regulating ATPase activity and the flow of protons through the CF(0) complex. In Symbiobacterium thermophilum (strain DSM 24528 / JCM 14929 / IAM 14863 / T), this protein is ATP synthase gamma chain.